A 103-amino-acid polypeptide reads, in one-letter code: Histone H4 (103 aa).

The segment covering 1–14 (MSGRGKGGKGLGKG) has biased composition (gly residues). Residues 1 to 20 (MSGRGKGGKGLGKGGAKRHR) are disordered. Position 2 is an N-acetylserine (serine 2). Lysine 6 and lysine 13 each carry N6-acetyl-N6-methyllysine; alternate. Residues 17–21 (KRHRK) mediate DNA binding. The residue at position 21 (lysine 21) is an N6-methyllysine.

This sequence belongs to the histone H4 family. As to quaternary structure, the nucleosome is a histone octamer containing two molecules each of H2A, H2B, H3 and H4 assembled in one H3-H4 heterotetramer and two H2A-H2B heterodimers. The octamer wraps approximately 147 bp of DNA.

It is found in the nucleus. The protein resides in the chromosome. Functionally, core component of nucleosome. Nucleosomes wrap and compact DNA into chromatin, limiting DNA accessibility to the cellular machineries which require DNA as a template. Histones thereby play a central role in transcription regulation, DNA repair, DNA replication and chromosomal stability. DNA accessibility is regulated via a complex set of post-translational modifications of histones, also called histone code, and nucleosome remodeling. This is Histone H4 from Solaster stimpsoni (Striped sun sea star).